Here is a 293-residue protein sequence, read N- to C-terminus: Probable xyloglucan endotransglucosylase/hydrolase protein 5 (293 aa).

The first 21 residues, 1 to 21 (MGRLSSTLCLTFLILATVAFG), serve as a signal peptide directing secretion. One can recognise a GH16 domain in the interval 23 to 220 (PPKKSINVPF…WEKAPFVASY (198 aa)). The Nucleophile role is filled by Glu106. Glu110 serves as the catalytic Proton donor. Glu110 is a binding site for xyloglucan. A glycan (N-linked (GlcNAc...) asparagine) is linked at Asn114. Residues 123–125 (QTN), 133–135 (NRE), 199–200 (DW), and Gly204 contribute to the xyloglucan site. Disulfide bonds link Cys228–Cys237 and Cys274–Cys287. Arg279 contacts xyloglucan.

This sequence belongs to the glycosyl hydrolase 16 family. XTH group 1 subfamily. Contains at least one intrachain disulfide bond essential for its enzymatic activity. Root specific.

The protein localises to the secreted. The protein resides in the cell wall. Its subcellular location is the extracellular space. It localises to the apoplast. The catalysed reaction is breaks a beta-(1-&gt;4) bond in the backbone of a xyloglucan and transfers the xyloglucanyl segment on to O-4 of the non-reducing terminal glucose residue of an acceptor, which can be a xyloglucan or an oligosaccharide of xyloglucan.. Functionally, catalyzes xyloglucan endohydrolysis (XEH) and/or endotransglycosylation (XET). Cleaves and religates xyloglucan polymers, an essential constituent of the primary cell wall, and thereby participates in cell wall construction of growing tissues. This chain is Probable xyloglucan endotransglucosylase/hydrolase protein 5 (XTH5), found in Arabidopsis thaliana (Mouse-ear cress).